The sequence spans 226 residues: ATP synthase subunit a (226 aa).

The next 5 helical transmembrane spans lie at 20 to 40, 74 to 94, 100 to 120, 162 to 182, and 187 to 207; these read LNWF…WLMP, FVSL…PYIF, LTLT…YGWI, LTAN…TGPM, and IILS…SAVA.

It belongs to the ATPase A chain family. F-type ATPases have 2 components, CF(1) - the catalytic core - and CF(0) - the membrane proton channel. CF(1) has five subunits: alpha(3), beta(3), gamma(1), delta(1), epsilon(1). CF(0) has three main subunits: a, b and c.

It localises to the mitochondrion inner membrane. In terms of biological role, mitochondrial membrane ATP synthase (F(1)F(0) ATP synthase or Complex V) produces ATP from ADP in the presence of a proton gradient across the membrane which is generated by electron transport complexes of the respiratory chain. F-type ATPases consist of two structural domains, F(1) - containing the extramembraneous catalytic core and F(0) - containing the membrane proton channel, linked together by a central stalk and a peripheral stalk. During catalysis, ATP synthesis in the catalytic domain of F(1) is coupled via a rotary mechanism of the central stalk subunits to proton translocation. Key component of the proton channel; it may play a direct role in the translocation of protons across the membrane. The chain is ATP synthase subunit a (mt:ATPase6) from Aedes albopictus (Asian tiger mosquito).